A 205-amino-acid chain; its full sequence is Ribosomal RNA small subunit methyltransferase G (205 aa).

S-adenosyl-L-methionine is bound by residues glycine 70, leucine 75, 124 to 125 (IE), and arginine 138.

This sequence belongs to the methyltransferase superfamily. RNA methyltransferase RsmG family.

The protein resides in the cytoplasm. It carries out the reaction guanosine(527) in 16S rRNA + S-adenosyl-L-methionine = N(7)-methylguanosine(527) in 16S rRNA + S-adenosyl-L-homocysteine. Its function is as follows. Specifically methylates the N7 position of guanine in position 527 of 16S rRNA. In Ruegeria sp. (strain TM1040) (Silicibacter sp.), this protein is Ribosomal RNA small subunit methyltransferase G.